Reading from the N-terminus, the 163-residue chain is HTH-type transcriptional regulator IscR (163 aa).

The HTH rrf2-type domain occupies 2–131; sequence RLTSKGRYAV…NNITLGELVN (130 aa). A DNA-binding region (H-T-H motif) is located at residues 28–51; it reads LADISERQGISLSYLEQLFSRLRK. C92, C98, and C104 together coordinate [2Fe-2S] cluster.

It depends on [2Fe-2S] cluster as a cofactor.

Its function is as follows. Regulates the transcription of several operons and genes involved in the biogenesis of Fe-S clusters and Fe-S-containing proteins. The protein is HTH-type transcriptional regulator IscR of Klebsiella pneumoniae subsp. pneumoniae (strain ATCC 700721 / MGH 78578).